The following is a 580-amino-acid chain: CTP synthase (580 aa).

The Glutamine amidotransferase type-1 domain occupies 304–559 (NIILVGKYVS…VAASSGCLDE (256 aa)). Catalysis depends on for GATase activity residues cysteine 403, histidine 532, and glutamate 534.

It belongs to the CTP synthase family.

The catalysed reaction is UTP + L-glutamine + ATP + H2O = CTP + L-glutamate + ADP + phosphate + 2 H(+). The protein operates within pyrimidine metabolism; CTP biosynthesis via de novo pathway; CTP from UDP: step 2/2. Catalyzes the ATP-dependent amination of UTP to CTP with either L-glutamine or ammonia as the source of nitrogen. The sequence is that of CTP synthase (URA7) from Gibberella zeae (strain ATCC MYA-4620 / CBS 123657 / FGSC 9075 / NRRL 31084 / PH-1) (Wheat head blight fungus).